A 598-amino-acid chain; its full sequence is Thiol:disulfide interchange protein DsbD (598 aa).

An N-terminal signal peptide occupies residues 1–19 (MAYRIITLILLLCSTSATA). C122 and C128 are oxidised to a cystine. The tract at residues 147–187 (DGQATAIEPMPSTSSRPAFNPPLPVEPRPAPELATSPAPAA) is disordered. The span at 165–176 (FNPPLPVEPRPA) shows a compositional bias: pro residues. 7 helical membrane passes run 197–217 (LPFTALWALLIGIGIAFTPCV), 242–262 (LLAFIYVQGMALTYTALGLVV), 277–297 (YVLVGLSAVFILLALSMFGLF), 330–350 (IAGLICSPCTTAPLSAILLYI), 356–376 (LWLGGGTLYLYALGMGLPLIL), 391–411 (WMSHVKTAFGFVILALPVFLL), and 423–443 (LWSMLGVAFFSWAFITSLGAT). C216 and C338 are joined by a disulfide. The Thioredoxin domain occupies 459–598 (LVSARPLQDW…FSAHLRDWQA (140 aa)). A disulfide bond links C513 and C516.

This sequence belongs to the thioredoxin family. DsbD subfamily.

Its subcellular location is the cell inner membrane. It carries out the reaction [protein]-dithiol + NAD(+) = [protein]-disulfide + NADH + H(+). The enzyme catalyses [protein]-dithiol + NADP(+) = [protein]-disulfide + NADPH + H(+). Functionally, required to facilitate the formation of correct disulfide bonds in some periplasmic proteins and for the assembly of the periplasmic c-type cytochromes. Acts by transferring electrons from cytoplasmic thioredoxin to the periplasm. This transfer involves a cascade of disulfide bond formation and reduction steps. The chain is Thiol:disulfide interchange protein DsbD from Klebsiella pneumoniae subsp. pneumoniae (strain ATCC 700721 / MGH 78578).